The following is an 89-amino-acid chain: MPPHGHHHHHHGHHGHHEHITITPVYAPPQVVQPIYAPPPVVQPVYVQPPVVYPQATIVLETGHHHGHHHHHGHHGHHDHHHHGHHGHH.

Composition is skewed to basic residues over residues M1–H17 and H65–H89. Disordered regions lie at residues M1 to V25 and L60 to H89.

This is an uncharacterized protein from Dictyostelium discoideum (Social amoeba).